The following is a 101-amino-acid chain: Enhancer of yellow 2 transcription factor (101 aa).

This sequence belongs to the ENY2 family. In terms of assembly, component of the nuclear pore complex (NPC)-associated TREX-2/AMEX complex (anchoring and mRNA export complex), composed of e(y)2, xmas and PCID2. Within the TREX-2/ AMEX complex, interactions with xmas is required for localization to the nuclear periphery. Component of the SAGA transcription coactivator-HAT complexes, at least composed of Ada2b, e(y)2, Pcaf/Gcn5, Taf10 and Nipped-A/Trrap. Within the SAGA complex, e(y)2, Sgf11, and not/nonstop form an additional subcomplex of SAGA called the DUB module (deubiquitination module). Component of the THO complex, composed of at least e(y)2, HPR1, THO2, THOC5, THOC6 and THOC7. Interacts with Taf9. Interacts with su(Hw) (via zinc fingers). Interacts with the nuclear pore complex (NPC). Interaction between the TREX-2/AMEX complex and the ORC complex is required for ORC localization to mRNPs, and consequently mRNA export. Within the TREX-2/AMEX-ORC complex, interacts with Orc6 and (via N-terminus or C-terminus) with Orc3. Interacts with the zinc finger protein CG9890. In terms of tissue distribution, ubiquitous.

Its subcellular location is the nucleus. It is found in the nucleoplasm. The protein localises to the cytoplasm. It localises to the nucleus membrane. Involved in mRNA export coupled transcription activation by association with both the TREX-2/AMEX and the SAGA complexes. The SAGA complex is a multiprotein complex that activates transcription by remodeling chromatin and mediating histone acetylation and deubiquitination. Within the SAGA complex, participates in a subcomplex that specifically deubiquitinates histone H2B. The SAGA complex is recruited to specific gene promoters by activators, where it is required for transcription. Required for nuclear receptor-mediated transactivation. Involved in transcription elongation by recruiting the THO complex onto nascent mRNA. The TREX-2/AMEX complex functions in docking export-competent ribonucleoprotein particles (mRNPs) to the nuclear entrance of the nuclear pore complex (nuclear basket). TREX-2/AMEX participates in mRNA export and accurate chromatin positioning in the nucleus by tethering genes to the nuclear periphery. Recruited to the su(Hw) insulators via its interaction with su(Hw) and participates in the barrier activity of such insulators. In contrast, it does not participate in the enhancer-blocking activity of the su(Hw) insulators. The chain is Enhancer of yellow 2 transcription factor from Drosophila melanogaster (Fruit fly).